Here is a 123-residue protein sequence, read N- to C-terminus: Small ribosomal subunit protein uS12 (123 aa).

Asp89 carries the 3-methylthioaspartic acid modification.

Belongs to the universal ribosomal protein uS12 family. As to quaternary structure, part of the 30S ribosomal subunit. Contacts proteins S8 and S17. May interact with IF1 in the 30S initiation complex.

Its function is as follows. With S4 and S5 plays an important role in translational accuracy. Functionally, interacts with and stabilizes bases of the 16S rRNA that are involved in tRNA selection in the A site and with the mRNA backbone. Located at the interface of the 30S and 50S subunits, it traverses the body of the 30S subunit contacting proteins on the other side and probably holding the rRNA structure together. The combined cluster of proteins S8, S12 and S17 appears to hold together the shoulder and platform of the 30S subunit. The chain is Small ribosomal subunit protein uS12 from Prochlorococcus marinus (strain MIT 9211).